Consider the following 344-residue polypeptide: L-sulfolactate dehydrogenase (344 aa).

The protein belongs to the LDH2/MDH2 oxidoreductase family.

Its subcellular location is the cytoplasm. It carries out the reaction a (2S)-2-hydroxycarboxylate + NAD(+) = a 2-oxocarboxylate + NADH + H(+). It participates in cofactor biosynthesis; coenzyme M biosynthesis; sulfoacetaldehyde from phosphoenolpyruvate and sulfite: step 3/4. The protein operates within cofactor biosynthesis; 5,6,7,8-tetrahydromethanopterin biosynthesis. Functionally, catalyzes the reduction of sulfopyruvate to (R)-sulfolactate much more efficiently than the reverse reaction. Also catalyzes the reduction of oxaloacetate, alpha-ketoglutarate, and to a much lower extent, KHTCA, but not pyruvate. Involved in the biosynthesis of both coenzyme M (with (R)-sulfolactate) and methanopterin (with alpha-ketoglutarate). The sequence is that of L-sulfolactate dehydrogenase (comC) from Methanocaldococcus jannaschii (strain ATCC 43067 / DSM 2661 / JAL-1 / JCM 10045 / NBRC 100440) (Methanococcus jannaschii).